We begin with the raw amino-acid sequence, 78 residues long: Large ribosomal subunit protein bL28 (78 aa).

A disordered region spans residues M1 to R23.

Belongs to the bacterial ribosomal protein bL28 family.

The chain is Large ribosomal subunit protein bL28 from Picosynechococcus sp. (strain ATCC 27264 / PCC 7002 / PR-6) (Agmenellum quadruplicatum).